The chain runs to 233 residues: Ion-translocating oxidoreductase complex subunit E (233 aa).

Helical transmembrane passes span 18-38, 39-59, 69-89, 92-112, 128-148, and 182-202; these read ALVQ…ATNA, LGLG…VSAL, IPIY…LINA, FGLY…CIVI, ALDG…LGAL, and PFLL…LLAG.

The protein belongs to the NqrDE/RnfAE family. The complex is composed of six subunits: RnfA, RnfB, RnfC, RnfD, RnfE and RnfG.

It is found in the cell inner membrane. Functionally, part of a membrane-bound complex that couples electron transfer with translocation of ions across the membrane. In Yersinia pseudotuberculosis serotype O:3 (strain YPIII), this protein is Ion-translocating oxidoreductase complex subunit E.